Reading from the N-terminus, the 288-residue chain is Mortality factor 4-like protein 2 (288 aa).

Positions 1 to 15 (MSSRKQASQTRGQQS) are enriched in polar residues. Positions 1 to 115 (MSSRKQASQT…DPTVESEEAF (115 aa)) are disordered. S71 is modified (phosphoserine). Positions 117–288 (SRMEVKVKIP…ASADYHRKAL (172 aa)) constitute an MRG domain.

As to quaternary structure, component of the NuA4 histone acetyltransferase complex which contains the catalytic subunit KAT5/TIP60 and the subunits EP400, TRRAP/PAF400, BRD8/SMAP, EPC1, DMAP1/DNMAP1, RUVBL1/TIP49, RUVBL2, ING3, actin, ACTL6A/BAF53A, MORF4L1/MRG15, MORF4L2/MRGX, MRGBP, YEATS4/GAS41 and VPS72/YL1. The NuA4 complex interacts with MYC and the adenovirus E1A protein. MORF4L1 may also participate in the formation of NuA4 related complexes which lack the KAT5/TIP60 catalytic subunit, but which include the SWI/SNF related protein SRCAP. Component of the MSIN3A histone deacetylase complex, which includes SIN3A, HDAC2, ARID4B, MORF4L1, RBBP4/RbAp48, and RBBP7/RbAp46. Interacts with MRFAP1 and RB1. May also interact with one or more as yet undefined members of the TLE (transducin-like enhancer of split) family of transcriptional repressors.

It localises to the nucleus. Its function is as follows. Component of the NuA4 histone acetyltransferase complex which is involved in transcriptional activation of select genes principally by acetylation of nucleosomal histone H4 and H2A. This modification may both alter nucleosome - DNA interactions and promote interaction of the modified histones with other proteins which positively regulate transcription. This complex may be required for the activation of transcriptional programs associated with oncogene and proto-oncogene mediated growth induction, tumor suppressor mediated growth arrest and replicative senescence, apoptosis, and DNA repair. The NuA4 complex ATPase and helicase activities seem to be, at least in part, contributed by the association of RUVBL1 and RUVBL2 with EP400. NuA4 may also play a direct role in DNA repair when directly recruited to sites of DNA damage. Also a component of the MSIN3A complex which acts to repress transcription by deacetylation of nucleosomal histones. The protein is Mortality factor 4-like protein 2 (Morf4l2) of Rattus norvegicus (Rat).